The chain runs to 605 residues: DNA primase (605 aa).

The segment at 38 to 62 adopts a CHC2-type zinc-finger fold; it reads CPFHDEKTPSFTVSEDKQICHCFGC. Residues 260-341 enclose the Toprim domain; the sequence is DEIVLLEGFM…NVFVIQLPSG (82 aa). Residues E266, D310, and D312 each coordinate Mg(2+).

Belongs to the DnaG primase family. As to quaternary structure, monomer. Interacts with DnaB. It depends on Zn(2+) as a cofactor. Mg(2+) serves as cofactor.

It catalyses the reaction ssDNA + n NTP = ssDNA/pppN(pN)n-1 hybrid + (n-1) diphosphate.. Functionally, RNA polymerase that catalyzes the synthesis of short RNA molecules used as primers for DNA polymerase during DNA replication. The protein is DNA primase of Staphylococcus aureus.